The primary structure comprises 682 residues: Potassium-transporting ATPase ATP-binding subunit (682 aa).

Helical transmembrane passes span 34–54, 62–82, 219–239, and 254–274; these read PVMF…IAMA, ALFS…ANFA, IALT…TATL, and VLVA…LSAI. Residue D307 is the 4-aspartylphosphate intermediate of the active site. ATP-binding positions include D344, E348, 377–384, and K395; that span reads FTAQSRMS. D518 and D522 together coordinate Mg(2+). The next 3 helical transmembrane spans lie at 588 to 608, 616 to 636, and 656 to 676; these read FAII…LNIM, AILS…PLAL, and IYGL…DLLL.

It belongs to the cation transport ATPase (P-type) (TC 3.A.3) family. Type IA subfamily. In terms of assembly, the system is composed of three essential subunits: KdpA, KdpB and KdpC.

The protein localises to the cell inner membrane. The catalysed reaction is K(+)(out) + ATP + H2O = K(+)(in) + ADP + phosphate + H(+). In terms of biological role, part of the high-affinity ATP-driven potassium transport (or Kdp) system, which catalyzes the hydrolysis of ATP coupled with the electrogenic transport of potassium into the cytoplasm. This subunit is responsible for energy coupling to the transport system and for the release of the potassium ions to the cytoplasm. The polypeptide is Potassium-transporting ATPase ATP-binding subunit (Escherichia coli O9:H4 (strain HS)).